The sequence spans 207 residues: Large ribosomal subunit protein bL25 (207 aa).

This sequence belongs to the bacterial ribosomal protein bL25 family. CTC subfamily. Part of the 50S ribosomal subunit; part of the 5S rRNA/L5/L18/L25 subcomplex. Contacts the 5S rRNA. Binds to the 5S rRNA independently of L5 and L18.

Functionally, this is one of the proteins that binds to the 5S RNA in the ribosome where it forms part of the central protuberance. This Dictyoglomus thermophilum (strain ATCC 35947 / DSM 3960 / H-6-12) protein is Large ribosomal subunit protein bL25.